A 365-amino-acid polypeptide reads, in one-letter code: Histidinol-phosphate aminotransferase (365 aa).

Residues M1–S21 form a disordered region. K221 is subject to N6-(pyridoxal phosphate)lysine.

It belongs to the class-II pyridoxal-phosphate-dependent aminotransferase family. Histidinol-phosphate aminotransferase subfamily. As to quaternary structure, homodimer. Requires pyridoxal 5'-phosphate as cofactor.

It catalyses the reaction L-histidinol phosphate + 2-oxoglutarate = 3-(imidazol-4-yl)-2-oxopropyl phosphate + L-glutamate. Its pathway is amino-acid biosynthesis; L-histidine biosynthesis; L-histidine from 5-phospho-alpha-D-ribose 1-diphosphate: step 7/9. The protein is Histidinol-phosphate aminotransferase of Rhodopseudomonas palustris (strain ATCC BAA-98 / CGA009).